The primary structure comprises 1161 residues: Mitogen-activated protein kinase kinase kinase (1161 aa).

The region spanning 56-120 (GDGSLWTALY…PKDFVTDEDP (65 aa)) is the SH3 domain. In terms of domain architecture, Protein kinase spans 142 to 402 (LDIKEVIGSG…KEILKQLESI (261 aa)). Residues 148 to 156 (IGSGGFCKV) and K169 contribute to the ATP site. D264 (proton acceptor) is an active-site residue. Residue T300 is modified to Phosphothreonine; by autocatalysis. S304 carries the phosphoserine; by autocatalysis modification. Leucine-zipper regions lie at residues 426–447 (IAGVLHDLREKEKELRNKEEQL) and 461–482 (LKIREQNLRERERVLIERELVM). Residues S525 and S560 each carry the phosphoserine modification. 2 disordered regions span residues 560–615 (SQLS…GSGG) and 658–678 (TTNNNNNNNNSISANNNNQLN). A compositionally biased stretch (polar residues) spans 571–583 (AQTSTHSSFSKSA). Over residues 591-601 (QQQNQQQVASL) the composition is skewed to low complexity. Residues S685, S773, and S792 each carry the phosphoserine modification. The disordered stretch occupies residues 790 to 830 (GNSPAVGRKKHSLDSSSHHPPANGSNSFALPNQLTLPSEDN). Polar residues predominate over residues 812–830 (NGSNSFALPNQLTLPSEDN). T862 carries the phosphothreonine modification. 3 disordered regions span residues 988-1014 (RSASPSLSSSSTTASASPSIASTEAVN), 1045-1093 (EQRQ…SAGS), and 1137-1161 (GGSSRSLKRKGKKPQTQSCEQLERC). Residues 989-1010 (SASPSLSSSSTTASASPSIAST) are compositionally biased toward low complexity. S993 carries the phosphoserine modification. Residues 1052-1063 (NQKKQRPKHITK) show a composition bias toward basic residues. Basic and acidic residues predominate over residues 1073 to 1086 (GQHHEHDDHNDPQH). A compositionally biased stretch (polar residues) spans 1150 to 1161 (PQTQSCEQLERC).

Belongs to the protein kinase superfamily. STE Ser/Thr protein kinase family. MAP kinase kinase kinase subfamily. Homodimer. Mg(2+) is required as a cofactor. In terms of processing, autophosphorylation on serine and threonine residues within the activation loop plays a role in enzyme activation. As to expression, expressed both maternally and zygotically. Expressed uniformly in large quantities in the early embryo (stages 1-4). In the late embryo, expression is ubiquitous, but expression levels are dramatically reduced. Expressed in the adult head and thorax, and in S2 cells.

The enzyme catalyses L-seryl-[protein] + ATP = O-phospho-L-seryl-[protein] + ADP + H(+). It catalyses the reaction L-threonyl-[protein] + ATP = O-phospho-L-threonyl-[protein] + ADP + H(+). Homodimerization via the leucine zipper domains is required for autophosphorylation and subsequent activation. Activated by C6-ceramide. Activates the JUN N-terminal pathway during dorsal closure. The sequence is that of Mitogen-activated protein kinase kinase kinase from Drosophila melanogaster (Fruit fly).